The following is a 298-amino-acid chain: 33 kDa chaperonin (298 aa).

Intrachain disulfides connect Cys239/Cys241 and Cys272/Cys275.

This sequence belongs to the HSP33 family. In terms of processing, under oxidizing conditions two disulfide bonds are formed involving the reactive cysteines. Under reducing conditions zinc is bound to the reactive cysteines and the protein is inactive.

Its subcellular location is the cytoplasm. Its function is as follows. Redox regulated molecular chaperone. Protects both thermally unfolding and oxidatively damaged proteins from irreversible aggregation. Plays an important role in the bacterial defense system toward oxidative stress. The chain is 33 kDa chaperonin from Picosynechococcus sp. (strain ATCC 27264 / PCC 7002 / PR-6) (Agmenellum quadruplicatum).